A 406-amino-acid chain; its full sequence is Nuclear hormone receptor family member nhr-133 (406 aa).

Positions 8-83 form a DNA-binding region, nuclear receptor; the sequence is SGPCEICEQP…VGMNSSKFQN (76 aa). An NR C4-type zinc finger spans residues 11 to 31; sequence CEICEQPAHGNHFGVLSCRAC. The NR C4-type; degenerate zinc-finger motif lies at 47-66; it reads DRVCRKGNCIGNDLYRCKIC. One can recognise an NR LBD domain in the interval 150-406; it reads YSWSPNHYPN…YSHPEMFEFS (257 aa).

The protein belongs to the nuclear hormone receptor family.

Its subcellular location is the nucleus. Its function is as follows. Orphan nuclear receptor. This chain is Nuclear hormone receptor family member nhr-133, found in Caenorhabditis elegans.